The chain runs to 265 residues: Hydroxyethylthiazole kinase (265 aa).

Met50 lines the substrate pocket. Residues Arg125 and Thr171 each contribute to the ATP site. A substrate-binding site is contributed by Gly198.

It belongs to the Thz kinase family. The cofactor is Mg(2+).

The enzyme catalyses 5-(2-hydroxyethyl)-4-methylthiazole + ATP = 4-methyl-5-(2-phosphooxyethyl)-thiazole + ADP + H(+). It functions in the pathway cofactor biosynthesis; thiamine diphosphate biosynthesis; 4-methyl-5-(2-phosphoethyl)-thiazole from 5-(2-hydroxyethyl)-4-methylthiazole: step 1/1. Functionally, catalyzes the phosphorylation of the hydroxyl group of 4-methyl-5-beta-hydroxyethylthiazole (THZ). The sequence is that of Hydroxyethylthiazole kinase from Salmonella arizonae (strain ATCC BAA-731 / CDC346-86 / RSK2980).